The chain runs to 602 residues: Isocitrate dehydrogenase kinase/phosphatase (602 aa).

Residues 325–331 and K346 contribute to the ATP site; that span reads APGIKGM. D381 is a catalytic residue.

The protein belongs to the AceK family.

It is found in the cytoplasm. The enzyme catalyses L-seryl-[isocitrate dehydrogenase] + ATP = O-phospho-L-seryl-[isocitrate dehydrogenase] + ADP + H(+). Functionally, bifunctional enzyme which can phosphorylate or dephosphorylate isocitrate dehydrogenase (IDH) on a specific serine residue. This is a regulatory mechanism which enables bacteria to bypass the Krebs cycle via the glyoxylate shunt in response to the source of carbon. When bacteria are grown on glucose, IDH is fully active and unphosphorylated, but when grown on acetate or ethanol, the activity of IDH declines drastically concomitant with its phosphorylation. This chain is Isocitrate dehydrogenase kinase/phosphatase, found in Paracidovorax citrulli (strain AAC00-1) (Acidovorax citrulli).